Consider the following 272-residue polypeptide: Exosome complex component Rrp42 (272 aa).

This sequence belongs to the RNase PH family. Rrp42 subfamily. Component of the archaeal exosome complex. Forms a hexameric ring-like arrangement composed of 3 Rrp41-Rrp42 heterodimers. The hexameric ring associates with a trimer of Rrp4 and/or Csl4 subunits.

The protein localises to the cytoplasm. Its function is as follows. Non-catalytic component of the exosome, which is a complex involved in RNA degradation. Contributes to the structuring of the Rrp41 active site. The chain is Exosome complex component Rrp42 from Thermococcus kodakarensis (strain ATCC BAA-918 / JCM 12380 / KOD1) (Pyrococcus kodakaraensis (strain KOD1)).